We begin with the raw amino-acid sequence, 218 residues long: Large ribosomal subunit protein uL3 (218 aa).

This sequence belongs to the universal ribosomal protein uL3 family. As to quaternary structure, part of the 50S ribosomal subunit. Forms a cluster with proteins L14 and L19.

In terms of biological role, one of the primary rRNA binding proteins, it binds directly near the 3'-end of the 23S rRNA, where it nucleates assembly of the 50S subunit. The sequence is that of Large ribosomal subunit protein uL3 from Corynebacterium glutamicum (strain R).